Here is a 196-residue protein sequence, read N- to C-terminus: Nodulation protein A (196 aa).

Belongs to the NodA family.

Its subcellular location is the cytoplasm. Its function is as follows. N-acyltransferase required for nodulation. Acts in the production of a small, heat-stable compound (Nod) that stimulates mitosis in various plant protoplasts. This chain is Nodulation protein A, found in Sinorhizobium terangae.